The following is a 344-amino-acid chain: Anthranilate phosphoribosyltransferase (344 aa).

5-phospho-alpha-D-ribose 1-diphosphate-binding positions include G84, 87–88 (GD), T92, 94–97 (NIST), 112–120 (KHGGRSVSS), and S124. G84 is an anthranilate binding site. Position 96 (S96) interacts with Mg(2+). R170 is a binding site for anthranilate. Mg(2+) contacts are provided by D229 and E230.

This sequence belongs to the anthranilate phosphoribosyltransferase family. In terms of assembly, homodimer. Mg(2+) is required as a cofactor.

The catalysed reaction is N-(5-phospho-beta-D-ribosyl)anthranilate + diphosphate = 5-phospho-alpha-D-ribose 1-diphosphate + anthranilate. It participates in amino-acid biosynthesis; L-tryptophan biosynthesis; L-tryptophan from chorismate: step 2/5. Functionally, catalyzes the transfer of the phosphoribosyl group of 5-phosphorylribose-1-pyrophosphate (PRPP) to anthranilate to yield N-(5'-phosphoribosyl)-anthranilate (PRA). The protein is Anthranilate phosphoribosyltransferase of Janthinobacterium sp. (strain Marseille) (Minibacterium massiliensis).